The following is a 275-amino-acid chain: MRVALKIAYIGSNFHGSQVQLNDPTVEGELFKVLKELGIMEDPRTANFISSGRTDSGVHAMGQVVAFDTDAPNLAMPRVINSKLPGTIWAWAHAIVPENFDPRRHALSRSYRYILYGEQFDISKIRSASKLLLGSHDFSNFSTSRGSKKTVRIVKRIDIRVSGNLTRIDVEANSFLWNMVRKIVAALMMVGSGVRDEEWLGHMLDPESYEEGLEPAHGYGLVLMDVNYPIPLEWVEDGYAIRRARERVHDHLVRYRVMADILSHLFPSESSDELL.

Asp-55 functions as the Nucleophile in the catalytic mechanism. Tyr-111 provides a ligand contact to substrate.

Belongs to the tRNA pseudouridine synthase TruA family.

The enzyme catalyses uridine(38/39/40) in tRNA = pseudouridine(38/39/40) in tRNA. Its function is as follows. Formation of pseudouridine at positions 38, 39 and 40 in the anticodon stem and loop of transfer RNAs. The sequence is that of tRNA pseudouridine synthase A from Methanococcoides burtonii (strain DSM 6242 / NBRC 107633 / OCM 468 / ACE-M).